The primary structure comprises 615 residues: Aspartokinase (615 aa).

Disordered stretches follow at residues 84–105 and 127–171; these read ALQP…GTAT and SSVS…SISQ. Composition is skewed to low complexity over residues 90-102 and 127-164; these read SSSG…SMSG and SSVS…ATPS. The ACT domain maps to 467-537; it reads IHSNRKTLSH…EVTVSKDMAI (71 aa).

This sequence belongs to the aspartokinase family.

It carries out the reaction L-aspartate + ATP = 4-phospho-L-aspartate + ADP. Its pathway is amino-acid biosynthesis; L-methionine biosynthesis via de novo pathway; L-homoserine from L-aspartate: step 1/3. It participates in amino-acid biosynthesis; L-threonine biosynthesis; L-threonine from L-aspartate: step 1/5. Functionally, phosphorylates aspartate, the first step in the biosynthesis of amino acids that derive from aspartate (the aspartate family of amino acids), including methioinine and threonine, the latter of which is a precursor to isoleucine. In Cryptococcus neoformans var. grubii serotype A (strain H99 / ATCC 208821 / CBS 10515 / FGSC 9487) (Filobasidiella neoformans var. grubii), this protein is Aspartokinase.